The sequence spans 390 residues: Lipid-A-disaccharide synthase (390 aa).

It belongs to the LpxB family.

It catalyses the reaction a lipid X + a UDP-2-N,3-O-bis[(3R)-3-hydroxyacyl]-alpha-D-glucosamine = a lipid A disaccharide + UDP + H(+). It functions in the pathway bacterial outer membrane biogenesis; LPS lipid A biosynthesis. In terms of biological role, condensation of UDP-2,3-diacylglucosamine and 2,3-diacylglucosamine-1-phosphate to form lipid A disaccharide, a precursor of lipid A, a phosphorylated glycolipid that anchors the lipopolysaccharide to the outer membrane of the cell. The sequence is that of Lipid-A-disaccharide synthase from Haemophilus influenzae (strain PittGG).